A 246-amino-acid chain; its full sequence is Uridylate kinase (246 aa).

18–21 (KVSG) contacts ATP. Glycine 60 contacts UMP. The ATP site is built by glycine 61 and arginine 65. UMP is bound by residues aspartate 80 and 141–148 (TGNPFFTT). Residues threonine 168, glutamine 169, tyrosine 174, and aspartate 177 each coordinate ATP.

This sequence belongs to the UMP kinase family. As to quaternary structure, homohexamer.

The protein localises to the cytoplasm. It catalyses the reaction UMP + ATP = UDP + ADP. Its pathway is pyrimidine metabolism; CTP biosynthesis via de novo pathway; UDP from UMP (UMPK route): step 1/1. With respect to regulation, inhibited by UTP. Functionally, catalyzes the reversible phosphorylation of UMP to UDP. The protein is Uridylate kinase of Gluconobacter oxydans (strain 621H) (Gluconobacter suboxydans).